An 804-amino-acid chain; its full sequence is Cell surface sensor MSB2 (804 aa).

The first 20 residues, 1–20, serve as a signal peptide directing secretion; it reads MHNFSKLAVAFVAAASFASA. Residues 21-694 lie on the Extracellular side of the membrane; that stretch reads EPETKAKVER…TNQSATQRGT (674 aa). A glycan (N-linked (GlcNAc...) asparagine) is linked at Asn45. 2 stretches are compositionally biased toward low complexity: residues 46–58 and 69–80; these read TTTP…SSTS and SSFSSSASSSSA. Disordered regions lie at residues 46 to 90 and 105 to 220; these read TTTP…RQPT and TDST…ATSN. Positions 46–475 are serine/threonine rich region (STR); that stretch reads TTTPASEASS…SVAPTSATSS (430 aa). 2 stretches are compositionally biased toward polar residues: residues 81–90 and 109–126; these read QELTASRQPT and PFSQ…SATG. 2 stretches are compositionally biased toward low complexity: residues 128–143 and 150–169; these read VTPI…PSTA and SALT…SVTS. Asn157 carries an N-linked (GlcNAc...) asparagine glycan. Polar residues predominate over residues 170–188; it reads PGSTSGPAGTPESSSASDF. Over residues 189–202 the composition is skewed to low complexity; it reads TSAVATSRASTATS. Asn298, Asn308, Asn357, and Asn393 each carry an N-linked (GlcNAc...) asparagine glycan. Positions 345–394 are enriched in polar residues; the sequence is VQTLPPVSTPTANGTVTSPPVDSQTTVLPTTTPGLSSDTIVTSPGVTANS. Positions 345 to 516 are disordered; the sequence is VQTLPPVSTP…APTVLPSDLP (172 aa). 2 stretches are compositionally biased toward low complexity: residues 395-407 and 427-476; these read TQVP…TIPT and NNTV…TSSA. N-linked (GlcNAc...) asparagine glycans are attached at residues Asn427 and Asn433. The tract at residues 482-641 is HKR11-MSB2 homology domain (HMH); the sequence is WLPTTIIVQA…NGMLAHNLTM (160 aa). The segment covering 493 to 508 has biased composition (polar residues); it reads LPSTTGSSTNAPSSAP. Residues Asn629, Asn638, Asn669, Asn683, and Asn686 are each glycosylated (N-linked (GlcNAc...) asparagine). A disordered region spans residues 658-689; that stretch reads KPAGAGSGTGGNGSNGPNDVFNNDNNSTNQSA. The segment covering 660 to 671 has biased composition (gly residues); sequence AGAGSGTGGNGS. Positions 672 to 686 are enriched in low complexity; sequence NGPNDVFNNDNNSTN. The chain crosses the membrane as a helical span at residues 695–715; that stretch reads VAGIAFGAVSLAAAYGAAMFI. At 716 to 804 the chain is on the cytoplasmic side; the sequence is VARRYKKKRQ…VAQENSLGWN (89 aa). Disordered stretches follow at residues 724-748 and 762-804; these read RQAH…PALM and GVMG…LGWN. Residues 731–744 are compositionally biased toward polar residues; it reads SSVATPSEMRQSGS. Low complexity predominate over residues 774–787; sequence GSNGSGRSAGNSAR.

The protein belongs to the HKR1/MSB2 family.

Its subcellular location is the cell membrane. It localises to the vacuole membrane. In terms of biological role, MSB2 and SHO1 have overlapping functions in recognizing various surface signals for MAPK PMK1 activation and appressorium formation. While MSB2 is critical for sensing surface hydrophobicity and cutin monomers, SHO1 may play a more important role in recognizing rice leaf waxes. The chain is Cell surface sensor MSB2 from Pyricularia oryzae (strain 70-15 / ATCC MYA-4617 / FGSC 8958) (Rice blast fungus).